Here is a 151-residue protein sequence, read N- to C-terminus: MLP-like protein 168 (151 aa).

This sequence belongs to the MLP family.

The chain is MLP-like protein 168 (MLP168) from Arabidopsis thaliana (Mouse-ear cress).